We begin with the raw amino-acid sequence, 298 residues long: tRNA-uridine aminocarboxypropyltransferase 2 (298 aa).

An N-acetylmethionine modification is found at Met-1. Basic and acidic residues predominate over residues 1–10 (MEPQAEERTL). The segment at 1-55 (MEPQAEERTLGEPAPPPSGALASPTPDEEERTEGGAPPTATPAGASGDSTSADGL) is disordered. Residues 34–45 (GGAPPTATPAGA) are compositionally biased toward low complexity. Ser-132 is modified (phosphoserine). The DXTW signature appears at 178–181 (DGTW).

The protein belongs to the TDD superfamily. DTWD2 family.

The protein localises to the nucleus. It is found in the cytoplasm. It carries out the reaction a uridine in tRNA + S-adenosyl-L-methionine = a 3-[(3S)-3-amino-3-carboxypropyl]uridine in tRNA + S-methyl-5'-thioadenosine + H(+). Its function is as follows. Catalyzes the formation of 3-(3-amino-3-carboxypropyl)uridine (acp3U) at position 20a in the D-loop of several cytoplasmic tRNAs (acp3U(20a)). Also has a weak activity to form acp3U at position 20 in the D-loop of tRNAs (acp3U(20)). Involved in glycoRNA biosynthesis by mediating formation of acp3U, which acts as an attachment site for N-glycans on tRNAs. GlycoRNAs consist of RNAs modified with secretory N-glycans that are presented on the cell surface. In Mus musculus (Mouse), this protein is tRNA-uridine aminocarboxypropyltransferase 2.